The primary structure comprises 879 residues: mRNA-binding protein PUF3 (879 aa).

Thr83 carries the phosphothreonine modification. Residues Ser207 and Ser210 each carry the phosphoserine modification. Disordered regions lie at residues 222 to 256 (ESDKNFNKLNRNTTNSGSLYHSSSNSGSSASLESE), 344 to 417 (PANE…QQQQ), and 443 to 512 (KKRN…QQTY). Positions 237–255 (SGSLYHSSSNSGSSASLES) are enriched in low complexity. Pro residues predominate over residues 370–395 (SSPPNNSPFPFAYPNPMMFMPPPPLS). Composition is skewed to low complexity over residues 398 to 417 (QQQQQQQQQQQQEDQQQQQQ), 449 to 463 (NHPANNSNNANKQAN), 472 to 491 (TKNTSKKNASSKSNESTANN), and 501 to 512 (HSQSLQQQQQTY). A PUM-HD domain is found at 513–871 (HRSPLLEQLR…RHLASVEKLA (359 aa)). 8 Pumilio repeats span residues 538-573 (DIFGHSLEFCKDQHGSRFIQRELATSPASEKEVIFN), 574-609 (EIRDDAIELSNDVFGNYVIQKFFEFGSKIQKNTLVD), 610-645 (QFKGNMKQLSLQMYACRVIQKALEYIDSNQRIELVL), 646-681 (ELSDSVLQMIKDQNGNHVIQKAIETIPIEKLPFILS), 682-717 (SLTGHIYHLSTHSYGCRVIQRLLEFGSSEDQESILN), 718-759 (ELKD…EIIE), 760-795 (TVANNVVEYSKHKFASNVVEKSILYGSKNQKDLIIS), and 807-844 (NLEDDSPMILMIKDQFANYVIQKLVNVSEGEGKKLIVI).

It belongs to the PUF3 family.

The protein localises to the mitochondrion outer membrane. The protein resides in the cytoplasm. Its function is as follows. RNA-binding protein involved in post-transcriptional regulation. Negatively regulates expression of COX17 by binding to the 3'-UTR of COX17 mRNA. Promotes decay of COX17 mRNA by enhancing its rate of deadenylation and subsequent turnover. Predominantly binds to mRNAs encoding mitochondrial proteins and localizes them to the vicinity of mitochondria for translation. Regulates mitochondrial biogenesis, motility and morphology. The polypeptide is mRNA-binding protein PUF3 (PUF3) (Saccharomyces cerevisiae (strain ATCC 204508 / S288c) (Baker's yeast)).